Here is a 215-residue protein sequence, read N- to C-terminus: Large ribosomal subunit protein uL3 (215 aa).

The segment at 136-155 is disordered; the sequence is GVSISHRSHGSTGQRQDPGK. Position 151 is an N5-methylglutamine (Gln151).

This sequence belongs to the universal ribosomal protein uL3 family. As to quaternary structure, part of the 50S ribosomal subunit. Forms a cluster with proteins L14 and L19. In terms of processing, methylated by PrmB.

In terms of biological role, one of the primary rRNA binding proteins, it binds directly near the 3'-end of the 23S rRNA, where it nucleates assembly of the 50S subunit. This chain is Large ribosomal subunit protein uL3, found in Rickettsia canadensis (strain McKiel).